The chain runs to 876 residues: Leucine--tRNA ligase (876 aa).

The tract at residues Met1–Asn20 is disordered. The 'HIGH' region motif lies at Pro43 to His53. Residues Lys632–Ser636 carry the 'KMSKS' region motif. Lys635 serves as a coordination point for ATP.

Belongs to the class-I aminoacyl-tRNA synthetase family.

Its subcellular location is the cytoplasm. The enzyme catalyses tRNA(Leu) + L-leucine + ATP = L-leucyl-tRNA(Leu) + AMP + diphosphate. In Rhizobium leguminosarum bv. trifolii (strain WSM2304), this protein is Leucine--tRNA ligase.